The sequence spans 423 residues: Cytidylate cyclase (423 aa).

One can recognise a Guanylate cyclase domain in the interval 79–184; the sequence is CSLFVDISGS…LKIRIGIDFG (106 aa). Phe82 contributes to the a ribonucleoside 5'-triphosphate binding site. Asp84, Ile85, and Asp128 together coordinate Mn(2+). The AGS-C domain stretch occupies residues 290-409; the sequence is ENEQFYSPRD…ICHDSFGLFI (120 aa).

It belongs to the adenylyl cyclase class-4/guanylyl cyclase family. Pyrimidine cyclase subfamily. As to quaternary structure, homodimer. The cofactor is Mn(2+).

The protein resides in the cytoplasm. The catalysed reaction is CTP = 3',5'-cyclic CMP + diphosphate. Pycsar (pyrimidine cyclase system for antiphage resistance) provides immunity against bacteriophage. The pyrimidine cyclase (PycC) synthesizes cyclic nucleotides in response to infection; these serve as specific second messenger signals. The signal activates the adjacent effector, leading to bacterial cell death and abortive phage infection. A clade E Pycsar system. Its function is as follows. The pyrimidine cyclase gene of a two-gene Pycsar system, weakly generates cyclic CMP (cCMP) from CTP, has little to no activity on ATP, GTP or UTP. Expression of this and adjacent effector SaPycTM (AC P0DV39) probably confers resistance to bacteriophage. The genes are probably only expressed in response to bacteriophage infection. This is Cytidylate cyclase from Staphylococcus aureus.